A 380-amino-acid polypeptide reads, in one-letter code: Queuine tRNA-ribosyltransferase (380 aa).

Asp-96 (proton acceptor) is an active-site residue. Residues 96–100 (DSGGF), Asp-150, Gln-193, and Gly-220 each bind substrate. The segment at 251–257 (GVGAPDS) is RNA binding. The active-site Nucleophile is the Asp-270. An RNA binding; important for wobble base 34 recognition region spans residues 275-279 (TRIAR). Zn(2+) is bound by residues Cys-308, Cys-310, Cys-313, and His-339.

Belongs to the queuine tRNA-ribosyltransferase family. Homodimer. Within each dimer, one monomer is responsible for RNA recognition and catalysis, while the other monomer binds to the replacement base PreQ1. The cofactor is Zn(2+).

It catalyses the reaction 7-aminomethyl-7-carbaguanine + guanosine(34) in tRNA = 7-aminomethyl-7-carbaguanosine(34) in tRNA + guanine. It functions in the pathway tRNA modification; tRNA-queuosine biosynthesis. In terms of biological role, catalyzes the base-exchange of a guanine (G) residue with the queuine precursor 7-aminomethyl-7-deazaguanine (PreQ1) at position 34 (anticodon wobble position) in tRNAs with GU(N) anticodons (tRNA-Asp, -Asn, -His and -Tyr). Catalysis occurs through a double-displacement mechanism. The nucleophile active site attacks the C1' of nucleotide 34 to detach the guanine base from the RNA, forming a covalent enzyme-RNA intermediate. The proton acceptor active site deprotonates the incoming PreQ1, allowing a nucleophilic attack on the C1' of the ribose to form the product. After dissociation, two additional enzymatic reactions on the tRNA convert PreQ1 to queuine (Q), resulting in the hypermodified nucleoside queuosine (7-(((4,5-cis-dihydroxy-2-cyclopenten-1-yl)amino)methyl)-7-deazaguanosine). The protein is Queuine tRNA-ribosyltransferase of Streptococcus agalactiae serotype Ia (strain ATCC 27591 / A909 / CDC SS700).